The sequence spans 414 residues: 3-phosphoshikimate 1-carboxyvinyltransferase (414 aa).

3-phosphoshikimate contacts are provided by K20, S21, and R25. K20 contacts phosphoenolpyruvate. R113 serves as a coordination point for phosphoenolpyruvate. 3-phosphoshikimate contacts are provided by S154, S155, Q156, S181, D296, and K323. Residue Q156 participates in phosphoenolpyruvate binding. The active-site Proton acceptor is the D296. Phosphoenolpyruvate is bound by residues R327, R371, and K395.

It belongs to the EPSP synthase family. As to quaternary structure, monomer.

The protein resides in the cytoplasm. The catalysed reaction is 3-phosphoshikimate + phosphoenolpyruvate = 5-O-(1-carboxyvinyl)-3-phosphoshikimate + phosphate. The protein operates within metabolic intermediate biosynthesis; chorismate biosynthesis. Catalyzes the transfer of the enolpyruvyl moiety of phosphoenolpyruvate (PEP) to the 5-hydroxyl of shikimate-3-phosphate (S3P) to produce enolpyruvyl shikimate-3-phosphate and inorganic phosphate. This chain is 3-phosphoshikimate 1-carboxyvinyltransferase, found in Saccharolobus solfataricus (strain ATCC 35092 / DSM 1617 / JCM 11322 / P2) (Sulfolobus solfataricus).